The chain runs to 548 residues: Glucose-6-phosphate isomerase (548 aa).

Glutamate 353 acts as the Proton donor in catalysis. Catalysis depends on residues histidine 384 and lysine 512.

This sequence belongs to the GPI family.

Its subcellular location is the cytoplasm. It catalyses the reaction alpha-D-glucose 6-phosphate = beta-D-fructose 6-phosphate. It functions in the pathway carbohydrate biosynthesis; gluconeogenesis. Its pathway is carbohydrate degradation; glycolysis; D-glyceraldehyde 3-phosphate and glycerone phosphate from D-glucose: step 2/4. Its function is as follows. Catalyzes the reversible isomerization of glucose-6-phosphate to fructose-6-phosphate. This is Glucose-6-phosphate isomerase from Chlorobium chlorochromatii (strain CaD3).